Reading from the N-terminus, the 942-residue chain is Serine/threonine-protein kinase ATG1 (942 aa).

Residues 11–312 enclose the Protein kinase domain; the sequence is YVVEKEIGKG…FEEFFNNKIV (302 aa). Residues 17 to 25 and Lys-41 each bind ATP; that span reads IGKGSFATV. The Proton acceptor role is filled by Asp-159. Positions 435–452 are enriched in polar residues; it reads NSSRVNKLDKSNLSGKSD. Disordered regions lie at residues 435-454, 505-529, and 817-836; these read NSSR…SDSS, QPHN…SRRA, and NSKP…NDSN. A compositionally biased stretch (low complexity) spans 515–529; that stretch reads RAPSTTSGGTSSRRA. Positions 819–834 are enriched in polar residues; sequence KPGTHNQSPKSKISND.

This sequence belongs to the protein kinase superfamily. Ser/Thr protein kinase family. APG1/unc-51/ULK1 subfamily. Homodimer. Forms a ternary complex with ATG13 and ATG17.

The protein localises to the cytoplasm. The protein resides in the preautophagosomal structure membrane. It catalyses the reaction L-seryl-[protein] + ATP = O-phospho-L-seryl-[protein] + ADP + H(+). The catalysed reaction is L-threonyl-[protein] + ATP = O-phospho-L-threonyl-[protein] + ADP + H(+). Its function is as follows. Serine/threonine protein kinase involved in the cytoplasm to vacuole transport (Cvt) and found to be essential in autophagy, where it is required for the formation of autophagosomes. Involved in the clearance of protein aggregates which cannot be efficiently cleared by the proteasome. Required for selective autophagic degradation of the nucleus (nucleophagy) as well as for mitophagy which contributes to regulate mitochondrial quantity and quality by eliminating the mitochondria to a basal level to fulfill cellular energy requirements and preventing excess ROS production. Also involved in endoplasmic reticulum-specific autophagic process, in selective removal of ER-associated degradation (ERAD) substrates. Plays a key role in ATG9 and ATG23 cycling through the pre-autophagosomal structure and is necessary to promote ATG18 binding to ATG9 through phosphorylation of ATG9. Catalyzes phosphorylation of ATG4, decreasing the interaction between ATG4 and ATG8 and impairing deconjugation of PE-conjugated forms of ATG8. Contributes to virulence by conferring resistance to unstable nutrient environments and immune defense of hosts. This Candida glabrata (strain ATCC 2001 / BCRC 20586 / JCM 3761 / NBRC 0622 / NRRL Y-65 / CBS 138) (Yeast) protein is Serine/threonine-protein kinase ATG1.